A 1098-amino-acid polypeptide reads, in one-letter code: MLNGLTRVSTSSELESILDIVQSSGEIAVVFTSPSIGDLETIASETQRRQLRIAGIPRGGYTILPAIPLYDDELLQMCERYTAANEYEKAEMRNSLYMREYPLFAYSMRHQRALFHPADYVSRILQFCSYYVQAPDADVLSLQDRSPFLHISPIKEICTQLRLIARGTPVAASDSESPVPEQLRLHAESDVEKLAAERATAMSIAASSGGASETEQLSLFSGVAPSALFQKDAVEEVNKDAEDTMEDLTGEETVDAVHSFQAEYLTLDGFELVTKASIFYDREGEGQCIVAVYIPGGVPEDTCRAAAAVLEPAATKKNLRAPTNGGLPPDTGIVGYYDYLTNPTQHKCRETEFSRRNWGLLAQSEPLLKHLDKLYSQLAPMHHHLQRVAIPSQYQLCGTVFSTITVNRNFRTAVHTDRGDFRSGLGVLSVINGEFEGCHLAIKRLKKAFQLKVGDVLLFDTSLEHGNTEVVNPEIHWQRTSVVCYLRTGLMSSVCEMERRKHLNRLILEQLLNTEVRNTTVNINGADSSLPPLFVPTRLASHLAPVQLAALGFIVERTEKQSGCVVAMTMGLGKTLVALTLCFSQLYLAPQADILILTPKPIISHWVDEKNKWGMHGLHFPHFVASDGLNSLEFEQQLLEYERQKNNEKPKSGHIFVINGEYLAGFLRRFKRFTPLVMIVDEGHRVAAKGNKLTESLDRLRCNLRIVLSGTPLQNDASELYRLVGWVNKGVSRVLPPKRFQELANDINQFVEGDDGAFYNAVVAQEYIQDWMRGFVFREMENDLPPLHDYLLICGSSDVQREYEEKLGLTETAMTALKATEHRPHHLSTHPACYLAFISDSYQSMVSGWTVRALSNTSRQRVSQLEEIDTMRLEQYVQLVENEQLDAFIDLSGKMRVLVDIVLRVQARKEKLIVFSLYVGSQDLIHRTLTALRVCTFTVRGRDSQDRRRRAMQEFSENKDLIVLVLSTKIAAYGLDFTAANHVVLFDSWWNPQVDAQAIARAYRRNQRKPVTVYRLISATENKFVLRSQTRKIALFKCILHERTSRQALPDELEDCAANEKDEERRNFWAKLKMTSLAGDTRALLNVYRYQESVRESE.

The thymine dioxygenase stretch occupies residues 1–540 (MLNGLTRVST…PPLFVPTRLA (540 aa)). Residues histidine 415, aspartate 417, and histidine 465 each coordinate Fe cation. Position 479 (arginine 479) interacts with 2-oxoglutarate. Residues 541-1098 (SHLAPVQLAA…RYQESVRESE (558 aa)) are DNA Helicase. The 176-residue stretch at 555-730 (VERTEKQSGC…YRLVGWVNKG (176 aa)) folds into the Helicase ATP-binding domain. Position 568–575 (568–575 (MTMGLGKT)) interacts with ATP. The DEAH box signature appears at 681–684 (DEGH). Residues 897–1057 (VLVDIVLRVQ…ALPDELEDCA (161 aa)) enclose the Helicase C-terminal domain.

The protein in the C-terminal section; belongs to the SNF2/RAD54 helicase family. This sequence in the N-terminal section; belongs to the TET family. JBP2 subfamily. The cofactor is Fe(2+).

Its subcellular location is the nucleus. It catalyses the reaction ATP + H2O = ADP + phosphate + H(+). The catalysed reaction is thymine + 2-oxoglutarate + O2 = 5-hydroxymethyluracil + succinate + CO2. In terms of biological role, dioxygenase that catalyzes the first step of DNA base J (beta-d-glucosyl-HOMedU) biosynthesis by converting thymine to 5-hydroxymethyluracil (HOMedU). DNA base J is a hypermodified thymidine residue found in the genome of kinetoplastid parasites, which is localized primarily to repetitive DNA, namely the telomeres, and is implicated in the regulation of antigenic variation. Probably also acts as a DNA helicase. Recognizes and binds specific regions of the genome, hydrolyzes ATP and allows the DNA base J de novo synthesis. Involved in initial synthesis of DNA base J, JBP1 being able to act via the basal level of DNA base J and propagate further synthesis. In contrast to JBP1, it does not specifically bind DNA base J, however it binds chromatin. This is Bifunctional helicase and thymine dioxygenase JBP2 (JBP2) from Leishmania major.